The primary structure comprises 244 residues: PF03932 family protein CutC (244 aa).

Belongs to the CutC family.

It localises to the cytoplasm. The chain is PF03932 family protein CutC from Pasteurella multocida (strain Pm70).